Here is a 503-residue protein sequence, read N- to C-terminus: SH2 domain-containing adapter protein B (503 aa).

2 disordered regions span residues 1-49 (MAKW…QACS) and 61-81 (CFSA…DLIR). Residue Ser-101 is modified to Phosphoserine. A compositionally biased stretch (low complexity) spans 147-157 (AAASSSSSSGS). The segment at 147–180 (AAASSSSSSGSPHLYRSSSERRPTTPAEVRYISP) is disordered. Lys-186 is covalently cross-linked (Glycyl lysine isopeptide (Lys-Gly) (interchain with G-Cter in SUMO2)). 3 disordered regions span residues 225–262 (ETGA…SAGY), 292–333 (DTPY…YDQP), and 345–381 (AAQF…IKHG). Positions 244 to 256 (FDAKSDLKSKAGK) are enriched in basic and acidic residues. 2 positions are modified to phosphoserine: Ser-301 and Ser-311. Residues 301-311 (SVDSDSESTVS) are compositionally biased toward polar residues. Residues 313 to 328 (RLRESKLPQDDDRPAD) show a composition bias toward basic and acidic residues. Phosphoserine is present on Ser-382. The region spanning 404–498 (WYHGAISRSD…AEHLSLLYPV (95 aa)) is the SH2 domain.

As to quaternary structure, interacts with phosphorylated 'Tyr-720' of the ligand-activated receptor PDGFRA via its SH2 domain. Interacts with the ligand-activated receptors PDGFRB, FGFR1, KDR/VEGFR2, IL2RB and IL2RG. Interacts with EPS8 and V-SRC. Interacts with GRB2 and GRAP. Interacts with CD3Z. Interacts with tyrosine-phosphorylated LAT upon T-cell antigen receptor activation. Interacts with PLCG1. Interacts with ZAP70, LCP2/SLP-76, VAV1 and GRAP2. Interacts with JAK1 and JAK3. Interacts with PTK2/FAK1. Interacts with CRK/CrKII. Interacts with IRS2. Interacts with PTPN11. Phosphorylated upon PDGFRA, PDGFRB, TCR, IL2 receptor, FGFR1 or VEGFR2 activation. As to expression, expressed in heart, liver, brain and kidney (at protein level).

The protein resides in the cytoplasm. It is found in the cell membrane. In terms of biological role, adapter protein which regulates several signal transduction cascades by linking activated receptors to downstream signaling components. May play a role in angiogenesis by regulating FGFR1, VEGFR2 and PDGFR signaling. May also play a role in T-cell antigen receptor/TCR signaling, interleukin-2 signaling, apoptosis and neuronal cells differentiation by mediating basic-FGF and NGF-induced signaling cascades. May also regulate IRS1 and IRS2 signaling in insulin-producing cells. This chain is SH2 domain-containing adapter protein B (Shb), found in Mus musculus (Mouse).